The chain runs to 338 residues: Penicillin V acylase (338 aa).

The propeptide at 1 to 3 is removed in mature form; that stretch reads MLG. The Nucleophile role is filled by Cys-4.

It belongs to the peptidase C59 family. Homotetramer. Post-translationally, expressed as an inactive precursor that is cleaved autocatalytically at Gly-3/Cys-4 to generate an active enzyme. Processing exposes a catalytic N-terminal nucleophile residue with a free alpha amino group.

It catalyses the reaction a penicillin + H2O = 6-aminopenicillanate + a carboxylate. Hydrolase activity is rapidly inhibited by lysine modifying reagents. Catalyzes the hydrolysis of penicillin V to 6-aminopenicillanate (6-APA). Exhibits high specificity for penicillin V. Penicillin G and other related compounds are hydrolyzed at less than 10% of the rate of penicillin V. Among the cephalosporins, cephalosporin C is resistant to cleavage, whereas cephalosporin G is cleaved at about 1% of the rate of cleavage of penicillin V. This chain is Penicillin V acylase, found in Lysinibacillus sphaericus (Bacillus sphaericus).